Reading from the N-terminus, the 576-residue chain is MAGUK p55 subfamily member 7 (576 aa).

L27 domains lie at 10–64 (SEMG…EDCA) and 65–122 (PTPV…YDPE). Residues 139 to 220 (IIRLVKNKEP…AITFKVVPGI (82 aa)) form the PDZ domain. The SH3 domain occupies 228–298 (EPKMFIKALF…PSKHFQERRL (71 aa)). A Guanylate kinase-like domain is found at 368 to 560 (HRLVVLVGPT…AFSELKQALK (193 aa)).

This sequence belongs to the MAGUK family.

The protein resides in the membrane. It localises to the cell junction. It is found in the tight junction. Its subcellular location is the adherens junction. In terms of biological role, acts as an important adapter that promotes epithelial cell polarity and tight junction formation. Involved in the assembly of protein complexes at sites of cell-cell contact. This chain is MAGUK p55 subfamily member 7 (mpp7), found in Danio rerio (Zebrafish).